The following is a 128-amino-acid chain: Large ribosomal subunit protein eL32 (128 aa).

The protein belongs to the eukaryotic ribosomal protein eL32 family.

This Thermoplasma volcanium (strain ATCC 51530 / DSM 4299 / JCM 9571 / NBRC 15438 / GSS1) protein is Large ribosomal subunit protein eL32 (rpl32e).